Consider the following 165-residue polypeptide: Hemolysin, heat labile (165 aa).

C151 and C161 are disulfide-bonded.

It belongs to the TDH hemolysin family. In terms of assembly, homodimer.

Its function is as follows. Bacterial hemolysins are exotoxins that attack blood cell membranes and cause cell rupture by mechanisms not clearly defined. This is Hemolysin, heat labile from Grimontia hollisae (Vibrio hollisae).